The sequence spans 359 residues: Protein FAM50 homolog (359 aa).

Disordered stretches follow at residues 122 to 150 (NLDD…EDQP) and 339 to 359 (PYDP…KSKK). Over residues 123–136 (LDDDEEEEEEDDED) the composition is skewed to acidic residues. Residues 137-150 (HDKKQLKIKQEDQP) are compositionally biased toward basic and acidic residues.

The protein belongs to the FAM50 family.

This Drosophila melanogaster (Fruit fly) protein is Protein FAM50 homolog.